The chain runs to 386 residues: Zinc finger protein 385A (386 aa).

Residues 74-98 (ISCNVCQIRFNSQSQAEAHYKGNRH) form a Matrin-type 1 zinc finger. Residues 88 to 193 (QAEAHYKGNR…ASLPGGSKEE (106 aa)) form a disordered region. The segment covering 103-121 (KGIEAAKTRGREPSVRESG) has biased composition (basic and acidic residues). The segment at 145-351 (NGLGPAPGSP…AGSPLSLRPA (207 aa)) is necessary for binding to ITPR1, CEBPA and p53/TP53 mRNAs. S185 bears the Phosphoserine mark. The Matrin-type 2 zinc finger occupies 201 to 225 (LYCALCKVAVNSLSQLEAHNKGTKH). At T248 the chain carries Phosphothreonine. The Matrin-type 3 zinc finger occupies 261 to 285 (FHCEICNVKVNSEVQLKQHISSRRH). Positions 279-305 (HISSRRHRDGVAGKPNPLLSRHKKPRG) are disordered.

Interacts with p53/TP53; the interaction is direct and enhances p53/TP53 transactivation functions on cell-cycle arrest target genes, resulting in growth arrest. Interacts with ELAVL1; the interaction is indirect, mRNA-dependent and may regulate p53/TP53 expression. Ubiquitinated upon prolonged exposure to genotoxic stress, which leads to proteasomal degradation of ZNF385A and releases p53/TP53 from cell-cycle arrest target gene promoters. In terms of tissue distribution, expressed in brain and testis (at protein level). In brain, the expression is located to olfactory bulb, cerebral cortex, hippocampus, satellite cells and Purkinje cells of the cerebellum molecular layer. Detected in bone marrow, white and brown adipose tissue, lung and at lower levels in the thymus.

The protein resides in the cytoplasm. The protein localises to the nucleus. It localises to the nucleolus. It is found in the cell projection. Its subcellular location is the dendrite. In terms of biological role, RNA-binding protein that affects the localization and the translation of a subset of mRNA. May play a role in adipogenesis through binding to the 3'-UTR of CEBPA mRNA and regulation of its translation. Targets ITPR1 mRNA to dendrites in Purkinje cells, and may regulate its activity-dependent translation. With ELAVL1, binds the 3'-UTR of p53/TP53 mRNAs to control their nuclear export induced by CDKN2A. Hence, may regulate p53/TP53 expression and mediate in part the CDKN2A anti-proliferative activity. May also bind CCNB1 mRNA. Alternatively, may also regulate p53/TP53 activity through direct protein-protein interaction. Interacts with p53/TP53 and promotes cell-cycle arrest over apoptosis enhancing preferentially the DNA binding and transactivation of p53/TP53 on cell-cycle arrest target genes over proapoptotic target genes. May also regulate the ubiquitination and stability of CDKN1A promoting DNA damage-induced cell cycle arrest. Also plays a role in megakaryocytes differentiation. The polypeptide is Zinc finger protein 385A (Znf385a) (Mus musculus (Mouse)).